The following is a 132-amino-acid chain: Chemokine-like protein TAFA-5 (132 aa).

Residues 1-43 form the signal peptide; that stretch reads MAPSPRTGSRQDATALPSMSSTFWAFMILASLLIAYCSQLAAG. N-linked (GlcNAc...) asparagine glycosylation is present at Asn113.

This sequence belongs to the TAFA family. In terms of tissue distribution, expressed in the subcutaneous and perirenal adipose tissue (at protein level). Highly expressed in adipose tissue with moderate expression in the brain and ovary. Isoform 2: Brain-specific.

The protein localises to the secreted. In terms of biological role, acts as a chemokine-like protein by regulating cell proliferation and migration through activation of G protein-coupled receptors (GPCRs), such as S1PR2 and FPR2. Stimulates chemotactic migration of macrophages mediated by the MAPK3/ERK1 and AKT1 pathway. Blocks TNFSF11/RANKL-induced osteoclast formation from macrophages by inhibiting up-regulation of osteoclast fusogenic and differentiation genes. Stimulation of macrophage migration and inhibition of osteoclast formation is mediated via GPCR FPR2. Acts as an adipokine by negatively regulating vascular smooth muscle cell (VSMC) proliferation and migration in response to platelet-derived growth factor stimulation via GPCR S1PR2 and G protein GNA12/GNA13-transmitted RHOA signaling. Inhibits injury-induced cell proliferation and neointima formation in the femoral arteries. The protein is Chemokine-like protein TAFA-5 of Homo sapiens (Human).